Consider the following 325-residue polypeptide: Dehydrogenase/reductase SDR family member 7B (325 aa).

At 1 to 17 (MVSAATRKSLLRARVMD) the chain is on the cytoplasmic side. Residues 18-38 (FITSTAILPLLLGCVGLFSLF) traverse the membrane as a helical; Signal-anchor for type II membrane protein segment. Over 39–325 (KLLQWLRMRA…ARKERKSKHS (287 aa)) the chain is Lumenal. NAD(+) contacts are provided by serine 62 and leucine 64. Serine 194 contacts substrate. NAD(+)-binding residues include tyrosine 207, lysine 211, and threonine 242. The active-site Proton acceptor is tyrosine 207.

This sequence belongs to the short-chain dehydrogenases/reductases (SDR) family.

It is found in the endoplasmic reticulum membrane. In terms of biological role, putative oxidoreductase. This is Dehydrogenase/reductase SDR family member 7B (DHRS7B) from Bos taurus (Bovine).